Consider the following 156-residue polypeptide: Cytochrome c-type biogenesis protein CcmE 1 (156 aa).

At M1–R8 the chain is on the cytoplasmic side. The chain crosses the membrane as a helical; Signal-anchor for type II membrane protein span at residues L9 to A29. At L30 to R156 the chain is on the periplasmic side. Residues H123 and Y127 each coordinate heme.

It belongs to the CcmE/CycJ family.

It localises to the cell inner membrane. Functionally, heme chaperone required for the biogenesis of c-type cytochromes. Transiently binds heme delivered by CcmC and transfers the heme to apo-cytochromes in a process facilitated by CcmF and CcmH. The sequence is that of Cytochrome c-type biogenesis protein CcmE 1 from Xanthomonas campestris pv. campestris (strain 8004).